We begin with the raw amino-acid sequence, 309 residues long: UDP-N-acetylenolpyruvoylglucosamine reductase (309 aa).

The FAD-binding PCMH-type domain maps to 25–188 (RVGGPADWLF…TSVTLQGNRE (164 aa)). Residue Arg-168 is part of the active site. Residues 202–231 (AKRDATQPTKALTAGSTFRNPAGFSSTGQA) form a disordered region. Residues 207–231 (TQPTKALTAGSTFRNPAGFSSTGQA) show a composition bias toward polar residues. Residue Ser-217 is the Proton donor of the active site. Glu-299 is a catalytic residue.

This sequence belongs to the MurB family. FAD is required as a cofactor.

The protein localises to the cytoplasm. It carries out the reaction UDP-N-acetyl-alpha-D-muramate + NADP(+) = UDP-N-acetyl-3-O-(1-carboxyvinyl)-alpha-D-glucosamine + NADPH + H(+). It functions in the pathway cell wall biogenesis; peptidoglycan biosynthesis. Its function is as follows. Cell wall formation. This is UDP-N-acetylenolpyruvoylglucosamine reductase from Jannaschia sp. (strain CCS1).